Consider the following 326-residue polypeptide: N-acetyl-gamma-glutamyl-phosphate reductase (326 aa).

C155 is a catalytic residue.

It belongs to the NAGSA dehydrogenase family. Type 1 subfamily.

It localises to the cytoplasm. The catalysed reaction is N-acetyl-L-glutamate 5-semialdehyde + phosphate + NADP(+) = N-acetyl-L-glutamyl 5-phosphate + NADPH + H(+). Its pathway is amino-acid biosynthesis; L-arginine biosynthesis; N(2)-acetyl-L-ornithine from L-glutamate: step 3/4. Functionally, catalyzes the NADPH-dependent reduction of N-acetyl-5-glutamyl phosphate to yield N-acetyl-L-glutamate 5-semialdehyde. This is N-acetyl-gamma-glutamyl-phosphate reductase from Shewanella loihica (strain ATCC BAA-1088 / PV-4).